A 153-amino-acid chain; its full sequence is Endoribonuclease YbeY (153 aa).

Zn(2+) contacts are provided by histidine 115, histidine 119, and histidine 125.

This sequence belongs to the endoribonuclease YbeY family. Requires Zn(2+) as cofactor.

It localises to the cytoplasm. Its function is as follows. Single strand-specific metallo-endoribonuclease involved in late-stage 70S ribosome quality control and in maturation of the 3' terminus of the 16S rRNA. This chain is Endoribonuclease YbeY, found in Blochmanniella floridana.